We begin with the raw amino-acid sequence, 559 residues long: 5'-AMP-activated protein kinase catalytic subunit alpha-1 (559 aa).

Positions 27-279 (YILGDTLGVG…IKDIREHEWF (253 aa)) constitute a Protein kinase domain. The residue at position 32 (Thr32) is a Phosphothreonine. ATP is bound by residues 33–41 (LGVGTFGKV) and Lys56. The Proton acceptor role is filled by Asp150. A Phosphothreonine; by LKB1 and CaMKK2 modification is found at Thr183. Phosphothreonine occurs at positions 269 and 355. The interval 302–381 (EALKEVCEKF…PERVPFLVAE (80 aa)) is AIS. Phosphoserine is present on Ser356. Ser360 bears the Phosphoserine; by ULK1 mark. Thr368 bears the Phosphothreonine; by ULK1 mark. Thr382 carries the post-translational modification Phosphothreonine. 3 positions are modified to phosphoserine: Ser397, Ser467, and Ser486. The span at 485-505 (KSGTATPQRSGSVSNYRSCQR) shows a compositional bias: polar residues. A disordered region spans residues 485 to 536 (KSGTATPQRSGSVSNYRSCQRSDSDAEAQGKSSEVSLTSSVTSLDSSPVDLT). Residues Thr488 and Thr490 each carry the phosphothreonine modification. Phosphoserine occurs at positions 496, 508, 524, and 527. Positions 516-535 (SSEVSLTSSVTSLDSSPVDL) are enriched in low complexity.

The protein belongs to the protein kinase superfamily. CAMK Ser/Thr protein kinase family. SNF1 subfamily. As to quaternary structure, AMPK is a heterotrimer of an alpha catalytic subunit (PRKAA1 or PRKAA2), a beta (PRKAB1 or PRKAB2) and a gamma non-catalytic subunits (PRKAG1, PRKAG2 or PRKAG3). Interacts with FNIP1 and FNIP2. In terms of assembly, (Microbial infection) Interacts with Dengue type 2 virus non-structural protein 1; this interaction promotes the AMPK/ERK/mTOR signaling pathway to induce autophagy. Mg(2+) is required as a cofactor. In terms of processing, ubiquitinated. Phosphorylated at Thr-183 by STK11/LKB1 in complex with STE20-related adapter-alpha (STRADA) pseudo kinase and CAB39. Also phosphorylated at Thr-183 by CAMKK2; triggered by a rise in intracellular calcium ions, without detectable changes in the AMP/ATP ratio. CAMKK1 can also phosphorylate Thr-183, but at a much lower level. Dephosphorylated by protein phosphatase 2A and 2C (PP2A and PP2C). Phosphorylated by ULK1 and ULK2; leading to negatively regulate AMPK activity and suggesting the existence of a regulatory feedback loop between ULK1, ULK2 and AMPK. Dephosphorylated by PPM1A and PPM1B. Post-translationally, glycosylated; O-GlcNAcylated by OGT, promoting the AMP-activated protein kinase (AMPK) activity.

The protein resides in the cytoplasm. It is found in the nucleus. The catalysed reaction is L-seryl-[protein] + ATP = O-phospho-L-seryl-[protein] + ADP + H(+). It carries out the reaction L-threonyl-[protein] + ATP = O-phospho-L-threonyl-[protein] + ADP + H(+). It catalyses the reaction L-seryl-[acetyl-CoA carboxylase] + ATP = O-phospho-L-seryl-[acetyl-CoA carboxylase] + ADP + H(+). The enzyme catalyses L-seryl-[3-hydroxy-3-methylglutaryl-coenzyme A reductase] + ATP = O-phospho-L-seryl-[3-hydroxy-3-methylglutaryl-coenzyme A reductase] + ADP + H(+). The catalysed reaction is L-seryl-[tau protein] + ATP = O-phospho-L-seryl-[tau protein] + ADP + H(+). It carries out the reaction L-threonyl-[tau protein] + ATP = O-phospho-L-threonyl-[tau protein] + ADP + H(+). Its activity is regulated as follows. Activated by phosphorylation on Thr-183. Binding of AMP to non-catalytic gamma subunit (PRKAG1, PRKAG2 or PRKAG3) results in allosteric activation, inducing phosphorylation on Thr-183. AMP-binding to gamma subunit also sustains activity by preventing dephosphorylation of Thr-183. ADP also stimulates Thr-183 phosphorylation, without stimulating already phosphorylated AMPK. ATP promotes dephosphorylation of Thr-183, rendering the enzyme inactive. Under physiological conditions AMPK mainly exists in its inactive form in complex with ATP, which is much more abundant than AMP. AMPK is activated by antihyperglycemic drug metformin, a drug prescribed to patients with type 2 diabetes: in vivo, metformin seems to mainly inhibit liver gluconeogenesis. However, metformin can be used to activate AMPK in muscle and other cells in culture or ex vivo. Selectively inhibited by compound C (6-[4-(2-Piperidin-1-yl-ethoxy)-phenyl)]-3-pyridin-4-yl-pyyrazolo[1,5-a] pyrimidine. Activated by resveratrol, a natural polyphenol present in red wine, and S17834, a synthetic polyphenol. Functionally, catalytic subunit of AMP-activated protein kinase (AMPK), an energy sensor protein kinase that plays a key role in regulating cellular energy metabolism. In response to reduction of intracellular ATP levels, AMPK activates energy-producing pathways and inhibits energy-consuming processes: inhibits protein, carbohydrate and lipid biosynthesis, as well as cell growth and proliferation. AMPK acts via direct phosphorylation of metabolic enzymes, and by longer-term effects via phosphorylation of transcription regulators. Regulates lipid synthesis by phosphorylating and inactivating lipid metabolic enzymes such as ACACA, ACACB, GYS1, HMGCR and LIPE; regulates fatty acid and cholesterol synthesis by phosphorylating acetyl-CoA carboxylase (ACACA and ACACB) and hormone-sensitive lipase (LIPE) enzymes, respectively. Promotes lipolysis of lipid droplets by mediating phosphorylation of isoform 1 of CHKA (CHKalpha2). Regulates insulin-signaling and glycolysis by phosphorylating IRS1, PFKFB2 and PFKFB3. AMPK stimulates glucose uptake in muscle by increasing the translocation of the glucose transporter SLC2A4/GLUT4 to the plasma membrane, possibly by mediating phosphorylation of TBC1D4/AS160. Regulates transcription and chromatin structure by phosphorylating transcription regulators involved in energy metabolism such as CRTC2/TORC2, FOXO3, histone H2B, HDAC5, MEF2C, MLXIPL/ChREBP, EP300, HNF4A, p53/TP53, SREBF1, SREBF2 and PPARGC1A. Acts as a key regulator of glucose homeostasis in liver by phosphorylating CRTC2/TORC2, leading to CRTC2/TORC2 sequestration in the cytoplasm. In response to stress, phosphorylates 'Ser-36' of histone H2B (H2BS36ph), leading to promote transcription. Acts as a key regulator of cell growth and proliferation by phosphorylating FNIP1, TSC2, RPTOR, WDR24 and ATG1/ULK1: in response to nutrient limitation, negatively regulates the mTORC1 complex by phosphorylating RPTOR component of the mTORC1 complex and by phosphorylating and activating TSC2. Also phosphorylates and inhibits GATOR2 subunit WDR24 in response to nutrient limitation, leading to suppress glucose-mediated mTORC1 activation. In response to energetic stress, phosphorylates FNIP1, inactivating the non-canonical mTORC1 signaling, thereby promoting nuclear translocation of TFEB and TFE3, and inducing transcription of lysosomal or autophagy genes. In response to nutrient limitation, promotes autophagy by phosphorylating and activating ATG1/ULK1. In that process, it also activates WDR45/WIPI4. Phosphorylates CASP6, thereby preventing its autoprocessing and subsequent activation. In response to nutrient limitation, phosphorylates transcription factor FOXO3 promoting FOXO3 mitochondrial import. Also acts as a regulator of cellular polarity by remodeling the actin cytoskeleton; probably by indirectly activating myosin. AMPK also acts as a regulator of circadian rhythm by mediating phosphorylation of CRY1, leading to destabilize it. May regulate the Wnt signaling pathway by phosphorylating CTNNB1, leading to stabilize it. Also has tau-protein kinase activity: in response to amyloid beta A4 protein (APP) exposure, activated by CAMKK2, leading to phosphorylation of MAPT/TAU; however the relevance of such data remains unclear in vivo. Also phosphorylates CFTR, EEF2K, KLC1, NOS3 and SLC12A1. Regulates hepatic lipogenesis. Activated via SIRT3, represses sterol regulatory element-binding protein (SREBP) transcriptional activities and ATP-consuming lipogenesis to restore cellular energy balance. Upon stress, regulates mitochondrial fragmentation through phosphorylation of MTFR1L. This is 5'-AMP-activated protein kinase catalytic subunit alpha-1 from Homo sapiens (Human).